The sequence spans 211 residues: Metalloproteinase inhibitor 3 (211 aa).

Positions 1–23 (MTPWLGLVVLLSCWSLGHWGTEA) are cleaved as a signal peptide. Cys24 contributes to the Zn(2+) binding site. Involved in metalloproteinase-binding regions lie at residues 24–27 (CTCS) and 88–89 (ES). Intrachain disulfides connect Cys24–Cys91, Cys26–Cys118, Cys36–Cys143, Cys145–Cys192, Cys150–Cys155, and Cys163–Cys184. The region spanning 24 to 143 (CTCSPSHPQD…GLNYRYHLGC (120 aa)) is the NTR domain. Positions 105–188 (TGRVYEGKMY…SKHYACIRQK (84 aa)) are mediates interaction with EFEMP1.

Belongs to the protease inhibitor I35 (TIMP) family. In terms of assembly, interacts with EFEMP1. Interacts with KDR.

The protein localises to the secreted. It localises to the extracellular space. It is found in the extracellular matrix. In terms of biological role, mediates a variety of processes including matrix regulation and turnover, inflammation, and angiogenesis, through reversible inhibition of zinc protease superfamily enzymes, primarily matrix metalloproteinases (MMPs). Regulates extracellular matrix (ECM) remodeling through inhibition of matrix metalloproteinases (MMP) including MMP-1, MMP-2, MMP-3, MMP-7, MMP-9, MMP-13, MMP-14 and MMP-15. Additionally, modulates the processing of amyloid precursor protein (APP) and apolipoprotein E receptor ApoER2 by inhibiting two alpha-secretases ADAM10 and ADAM17. Functions as a tumor suppressor and a potent inhibitor of angiogenesis. Exerts its anti-angiogenic effect by directly interacting with vascular endothelial growth factor (VEGF) receptor-2/KDR, preventing its binding to the VEGFA ligand. Selectively induces apoptosis in angiogenic endothelial cells through a caspase-independent cell death pathway. Mechanistically, inhibits matrix-induced focal adhesion kinase PTK2 tyrosine phosphorylation and association with paxillin/PXN and disrupts the incorporation of ITGB3, PTK2 and PXN into focal adhesion contacts on the matrix. The chain is Metalloproteinase inhibitor 3 (Timp3) from Rattus norvegicus (Rat).